A 92-amino-acid polypeptide reads, in one-letter code: Small ribosomal subunit protein uS19 (92 aa).

This sequence belongs to the universal ribosomal protein uS19 family.

Its function is as follows. Protein S19 forms a complex with S13 that binds strongly to the 16S ribosomal RNA. The polypeptide is Small ribosomal subunit protein uS19 (Bacillus mycoides (strain KBAB4) (Bacillus weihenstephanensis)).